The chain runs to 943 residues: Translation initiation factor IF-2 (943 aa).

Residues 30-357 are disordered; the sequence is SVKSHSSSVE…KPVTERKFHE (328 aa). Composition is skewed to basic and acidic residues over residues 69-82, 112-137, 145-155, 163-196, and 224-253; these read PKEEKVEPKVDKAS, FKAEREARAKAEAERRKNGGGRDNRN, QGKRHNNDRRN, DHNKGNRDNSTNHDRNFQGKLRNDQNQNNRRDNA, and RQSETRFREEKAAEQRRAKEQEKARKEKQQ. Low complexity predominate over residues 254–266; sequence VKVAVQKAAAETK. The span at 296-309 shows a compositional bias: basic and acidic residues; sequence KSRDNRRVNEDGPK. Positions 313–332 are enriched in low complexity; sequence NNKWNNQNQVRNQRNSNWNK. The tr-type G domain occupies 445 to 614; sequence ERAPVVTIMG…LLVAEVEELK (170 aa). A G1 region spans residues 454 to 461; sequence GHVDHGKT. 454–461 lines the GTP pocket; the sequence is GHVDHGKT. A G2 region spans residues 479-483; sequence GITQH. A G3 region spans residues 500–503; it reads DTPG. Residues 500-504 and 554-557 contribute to the GTP site; these read DTPGH and NKID. Positions 554–557 are G4; sequence NKID. Positions 590-592 are G5; that stretch reads SAK.

This sequence belongs to the TRAFAC class translation factor GTPase superfamily. Classic translation factor GTPase family. IF-2 subfamily.

It is found in the cytoplasm. One of the essential components for the initiation of protein synthesis. Protects formylmethionyl-tRNA from spontaneous hydrolysis and promotes its binding to the 30S ribosomal subunits. Also involved in the hydrolysis of GTP during the formation of the 70S ribosomal complex. The chain is Translation initiation factor IF-2 from Streptococcus thermophilus (strain ATCC BAA-250 / LMG 18311).